Consider the following 202-residue polypeptide: Small ribosomal subunit protein uS2 (202 aa).

This sequence belongs to the universal ribosomal protein uS2 family. In terms of assembly, part of the 30S ribosomal subunit.

The chain is Small ribosomal subunit protein uS2 from Pyrococcus furiosus (strain ATCC 43587 / DSM 3638 / JCM 8422 / Vc1).